Consider the following 129-residue polypeptide: Transcription factor bHLH138 (129 aa).

Residues 1–18 (MERYTKKNERFKAEEGKG) are compositionally biased toward basic and acidic residues. The interval 1–24 (MERYTKKNERFKAEEGKGSKKSRT) is disordered. One can recognise a bHLH domain in the interval 19–68 (SKKSRTFLTERERRALFNDRFFDLKNLIPNPTKGGEASIVQDGIVYINEL).

The protein belongs to the bHLH protein family.

The protein localises to the nucleus. The sequence is that of Transcription factor bHLH138 from Arabidopsis thaliana (Mouse-ear cress).